The chain runs to 149 residues: SsrA-binding protein (149 aa).

Belongs to the SmpB family.

The protein localises to the cytoplasm. In terms of biological role, required for rescue of stalled ribosomes mediated by trans-translation. Binds to transfer-messenger RNA (tmRNA), required for stable association of tmRNA with ribosomes. tmRNA and SmpB together mimic tRNA shape, replacing the anticodon stem-loop with SmpB. tmRNA is encoded by the ssrA gene; the 2 termini fold to resemble tRNA(Ala) and it encodes a 'tag peptide', a short internal open reading frame. During trans-translation Ala-aminoacylated tmRNA acts like a tRNA, entering the A-site of stalled ribosomes, displacing the stalled mRNA. The ribosome then switches to translate the ORF on the tmRNA; the nascent peptide is terminated with the 'tag peptide' encoded by the tmRNA and targeted for degradation. The ribosome is freed to recommence translation, which seems to be the essential function of trans-translation. In Anaplasma phagocytophilum (strain HZ), this protein is SsrA-binding protein.